The chain runs to 198 residues: Holliday junction resolvase RecU (198 aa).

A disordered region spans residues 1-22 (MVNYPHKVSSQKRQTSLSQPKN). Polar residues predominate over residues 11–22 (QKRQTSLSQPKN). Mg(2+)-binding residues include Thr81, Asp83, Glu96, and Gln115.

It belongs to the RecU family. It depends on Mg(2+) as a cofactor.

Its subcellular location is the cytoplasm. The catalysed reaction is Endonucleolytic cleavage at a junction such as a reciprocal single-stranded crossover between two homologous DNA duplexes (Holliday junction).. Endonuclease that resolves Holliday junction intermediates in genetic recombination. Cleaves mobile four-strand junctions by introducing symmetrical nicks in paired strands. Promotes annealing of linear ssDNA with homologous dsDNA. Required for DNA repair, homologous recombination and chromosome segregation. This Streptococcus pneumoniae serotype 2 (strain D39 / NCTC 7466) protein is Holliday junction resolvase RecU.